Reading from the N-terminus, the 207-residue chain is Outer-membrane lipoprotein LolB (207 aa).

The signal sequence occupies residues Met-1–Ala-21. Cys-22 carries N-palmitoyl cysteine lipidation. Cys-22 is lipidated: S-diacylglycerol cysteine.

This sequence belongs to the LolB family. As to quaternary structure, monomer.

The protein resides in the cell outer membrane. Plays a critical role in the incorporation of lipoproteins in the outer membrane after they are released by the LolA protein. The polypeptide is Outer-membrane lipoprotein LolB (Yersinia enterocolitica serotype O:8 / biotype 1B (strain NCTC 13174 / 8081)).